Reading from the N-terminus, the 403-residue chain is Argininosuccinate synthase (403 aa).

9-17 (AYSGGLDTS) contacts ATP. Tyr-86 provides a ligand contact to L-citrulline. Gly-116 provides a ligand contact to ATP. Residues Thr-118, Asn-122, and Asp-123 each coordinate L-aspartate. Asn-122 serves as a coordination point for L-citrulline. Arg-126, Ser-174, Glu-259, and Tyr-271 together coordinate L-citrulline.

The protein belongs to the argininosuccinate synthase family. Type 1 subfamily. In terms of assembly, homotetramer.

It is found in the cytoplasm. It catalyses the reaction L-citrulline + L-aspartate + ATP = 2-(N(omega)-L-arginino)succinate + AMP + diphosphate + H(+). It participates in amino-acid biosynthesis; L-arginine biosynthesis; L-arginine from L-ornithine and carbamoyl phosphate: step 2/3. The sequence is that of Argininosuccinate synthase from Ligilactobacillus salivarius (strain UCC118) (Lactobacillus salivarius).